The chain runs to 393 residues: S-adenosylmethionine synthase 4 (393 aa).

Residue Glu9 coordinates Mg(2+). His15 is an ATP binding site. Glu43 serves as a coordination point for K(+). L-methionine-binding residues include Glu56 and Gln99. ATP contacts are provided by residues 167–169, 235–238, Asp246, 252–253, Ala269, Lys273, and Lys277; these read DGK, SGRF, and RK. Residue Asp246 coordinates L-methionine. Lys277 lines the L-methionine pocket.

The protein belongs to the AdoMet synthase family. As to quaternary structure, homotetramer. Requires Mn(2+) as cofactor. The cofactor is Mg(2+). Co(2+) is required as a cofactor. It depends on K(+) as a cofactor.

Its subcellular location is the cytoplasm. It carries out the reaction L-methionine + ATP + H2O = S-adenosyl-L-methionine + phosphate + diphosphate. The protein operates within amino-acid biosynthesis; S-adenosyl-L-methionine biosynthesis; S-adenosyl-L-methionine from L-methionine: step 1/1. In terms of biological role, catalyzes the formation of S-adenosylmethionine from methionine and ATP. The reaction comprises two steps that are both catalyzed by the same enzyme: formation of S-adenosylmethionine (AdoMet) and triphosphate, and subsequent hydrolysis of the triphosphate. This is S-adenosylmethionine synthase 4 (METK4) from Vitis vinifera (Grape).